The following is a 95-amino-acid chain: SMAD5 antisense gene protein 1 (95 aa).

2 disordered regions span residues 1-24 and 43-70; these read MHKQPKLLPPPATPPPPPQSSSWS and SSPTGLPKPHSPMPSPPEPEHSVGKPAN. Over residues 7–19 the composition is skewed to pro residues; sequence LLPPPATPPPPPQ.

Expressed in fetal tissues.

The chain is SMAD5 antisense gene protein 1 (SMAD5-AS1) from Homo sapiens (Human).